Reading from the N-terminus, the 401-residue chain is S-adenosylmethionine synthase (401 aa).

Residue 136 to 141 coordinates ATP; that stretch reads GQGSVD.

The protein belongs to the AdoMet synthase 2 family. Mg(2+) is required as a cofactor.

It catalyses the reaction L-methionine + ATP + H2O = S-adenosyl-L-methionine + phosphate + diphosphate. It participates in amino-acid biosynthesis; S-adenosyl-L-methionine biosynthesis; S-adenosyl-L-methionine from L-methionine: step 1/1. Functionally, catalyzes the formation of S-adenosylmethionine from methionine and ATP. The protein is S-adenosylmethionine synthase of Pyrococcus furiosus (strain ATCC 43587 / DSM 3638 / JCM 8422 / Vc1).